The sequence spans 109 residues: Nucleoid-associated protein VV1_2004 (109 aa).

The protein belongs to the YbaB/EbfC family. Homodimer.

Its subcellular location is the cytoplasm. The protein resides in the nucleoid. In terms of biological role, binds to DNA and alters its conformation. May be involved in regulation of gene expression, nucleoid organization and DNA protection. The polypeptide is Nucleoid-associated protein VV1_2004 (Vibrio vulnificus (strain CMCP6)).